We begin with the raw amino-acid sequence, 427 residues long: Intermediate conductance calcium-activated potassium channel protein 4 (427 aa).

The chain crosses the membrane as a helical span at residues 29–49 (ALVLAGTGIGLMVLHAEMLWF). A helical membrane pass occupies residues 59 to 79 (FLVKCTISISTFLLLCLIVAF). Residues 108 to 128 (IVLELVVCGLHPAPVRGPPCV) traverse the membrane as a helical segment. The chain crosses the membrane as a helical span at residues 143-163 (GFLGQGEALLSLAMLLRLYLV). The chain crosses the membrane as a helical span at residues 207–227 (LLLGLTLGLWLTTAWVLSVAE). An intramembrane region (pore-forming) is located at residues 241 to 261 (LWLIPITFLTIGYGDVVPGTM). The helical transmembrane segment at 265–285 (IVCLCTGVMGVCCTALLVAVV) threads the bilayer. Positions 286-347 (ARKLEFNKAE…RRHQRKLLAA (62 aa)) are calmodulin-binding. At histidine 358 the chain carries Phosphohistidine.

This sequence belongs to the potassium channel KCNN family. KCa3.1/KCNN4 subfamily. Homodimer. Homotetramer. Heterotetramer of potassium channel proteins. Interacts with MTMR6; this interaction leads to selective dephosphorylation of PI(3)P in a lipid microdomain adjacent to KCNN4, resulting in a decrease of intermediate conductance calcium-activated potassium channel activity. Interacts (via the C-tail domain) with CALM1; the calmodulin binding is constitutive, does not require calcium and mediates calcium-dependent gating and four calmodulin molecules bind to one channel tetramer. Post-translationally, phosphorylation at His-358 by NDKB activates the intermediate conductance calcium-activated potassium channel activity, and conversely it's dephosphorylation by PHPT1 inhibits this activity. In terms of tissue distribution, widely expressed in non-excitable tissues.

It is found in the cell membrane. Its subcellular location is the cell projection. The protein resides in the ruffle membrane. The enzyme catalyses K(+)(in) = K(+)(out). With respect to regulation, the channel is inhibited by clotrimazole and charybdotoxin but is insensitive to apamin. In terms of biological role, intermediate conductance calcium-activated potassium channel that mediates the voltage-independent transmembrane transfer of potassium across the cell membrane through a constitutive interaction with calmodulin which binds the intracellular calcium allowing its opening. The current is characterized by a voltage-independent activation, an intracellular calcium concentration increase-dependent activation and a single-channel conductance of about 25 picosiemens. Also presents an inwardly rectifying current, thus reducing its already small outward conductance of potassium ions, which is particularly the case when the membrane potential displays positive values, above + 20 mV. Controls calcium influx during vascular contractility by being responsible of membrane hyperpolarization induced by vasoactive factors in proliferative vascular smooth muscle cell types. Following calcium influx, the consecutive activation of KCNN4 channel leads to a hyperpolarization of the cell membrane potential and hence an increase of the electrical driving force for further calcium influx promoting sustained calcium entry in response to stimulation with chemotactic peptides. Required for maximal calcium influx and proliferation during the reactivation of naive T-cells. Plays a role in the late stages of EGF-induced macropinocytosis through activation by PI(3)P. The sequence is that of Intermediate conductance calcium-activated potassium channel protein 4 from Homo sapiens (Human).